A 596-amino-acid chain; its full sequence is UvrABC system protein C (596 aa).

Residues 14–91 form the GIY-YIG domain; sequence DQPGCYLMKD…IKLHDPKYNV (78 aa). One can recognise a UVR domain in the interval 196–231; the sequence is EAVKKELEVKMLAAAENLEFERAKEFRDQIAHIDTV.

It belongs to the UvrC family. In terms of assembly, interacts with UvrB in an incision complex.

It is found in the cytoplasm. In terms of biological role, the UvrABC repair system catalyzes the recognition and processing of DNA lesions. UvrC both incises the 5' and 3' sides of the lesion. The N-terminal half is responsible for the 3' incision and the C-terminal half is responsible for the 5' incision. In Lysinibacillus sphaericus (strain C3-41), this protein is UvrABC system protein C.